A 206-amino-acid chain; its full sequence is Imidazoleglycerol-phosphate dehydratase (206 aa).

Belongs to the imidazoleglycerol-phosphate dehydratase family.

It is found in the cytoplasm. It catalyses the reaction D-erythro-1-(imidazol-4-yl)glycerol 3-phosphate = 3-(imidazol-4-yl)-2-oxopropyl phosphate + H2O. It participates in amino-acid biosynthesis; L-histidine biosynthesis; L-histidine from 5-phospho-alpha-D-ribose 1-diphosphate: step 6/9. The sequence is that of Imidazoleglycerol-phosphate dehydratase from Cutibacterium acnes (strain DSM 16379 / KPA171202) (Propionibacterium acnes).